Here is a 725-residue protein sequence, read N- to C-terminus: Manganese-exporting P-type ATPase (725 aa).

An HMA domain is found at 25–92 (GRMRIQIEWV…AISGAAHVAA (68 aa)). Helical transmembrane passes span 101-119 (HSSD…GAAA), 142-160 (LVAS…RGAL), 165-179 (TGTD…IASL), 188-202 (LAVL…YLQD), 335-359 (VGEN…AITK), and 365-383 (MTVL…TPTA). Asp-416 serves as the catalytic 4-aspartylphosphate intermediate. 3 residues coordinate Mg(2+): Asp-416, Thr-418, and Asp-618. 2 helical membrane passes run 669–688 (AVEV…AAGL) and 698–717 (PVLA…ANSS).

This sequence belongs to the cation transport ATPase (P-type) (TC 3.A.3) family. Type IB subfamily.

It localises to the cell membrane. It carries out the reaction Mn(2+)(in) + ATP + H2O = Mn(2+)(out) + ADP + phosphate + H(+). High affinity, slow turnover Mn(2+) transporting ATPase. In Mycobacterium leprae (strain TN), this protein is Manganese-exporting P-type ATPase (ctpC).